A 379-amino-acid chain; its full sequence is Glucose-1-phosphate adenylyltransferase (379 aa).

Residues glycine 164, 179–180 (EK), and serine 190 contribute to the alpha-D-glucose 1-phosphate site.

Belongs to the bacterial/plant glucose-1-phosphate adenylyltransferase family. Homotetramer.

It carries out the reaction alpha-D-glucose 1-phosphate + ATP + H(+) = ADP-alpha-D-glucose + diphosphate. It participates in glycan biosynthesis; glycogen biosynthesis. In terms of biological role, involved in the biosynthesis of ADP-glucose, a building block required for the elongation reactions to produce glycogen. Catalyzes the reaction between ATP and alpha-D-glucose 1-phosphate (G1P) to produce pyrophosphate and ADP-Glc. The chain is Glucose-1-phosphate adenylyltransferase from Streptococcus agalactiae serotype Ia (strain ATCC 27591 / A909 / CDC SS700).